Consider the following 266-residue polypeptide: Basic endochitinase C (266 aa).

An N-terminal signal peptide occupies residues 1-23 (MRSLAVVVAVVATVAMAIGTAHG). 3 disulfides stabilise this stretch: Cys46-Cys108, Cys120-Cys128, and Cys246-Cys259. The active-site Proton donor is Glu90.

This sequence belongs to the glycosyl hydrolase 19 family. Chitinase class II subfamily. As to expression, localized to the starchy endoderm of the seed May localize to other parts of the seed including the aleurone cells (at protein level).

The enzyme catalyses Random endo-hydrolysis of N-acetyl-beta-D-glucosaminide (1-&gt;4)-beta-linkages in chitin and chitodextrins.. In terms of biological role, defense against chitin-containing fungal pathogens. Binds the hyphal tips of fungi and degrades nascent chitin. The polypeptide is Basic endochitinase C (Secale cereale (Rye)).